Reading from the N-terminus, the 265-residue chain is Protein ENDO16 (265 aa).

The Cell attachment site motif lies at 25–27; that stretch reads RGD. The tract at residues 71–265 is disordered; the sequence is SPNAPSSQME…KEEEEEERSG (195 aa). Positions 73–92 are enriched in polar residues; it reads NAPSSQMESEGSANPSTIGS. 4 consecutive repeat copies span residues 75-94, 105-124, 128-147, and 148-167. Residues 75–257 form a 6 X approximate repeats region; the sequence is PSSQMESEGS…QSESEDPEKE (183 aa). 6 stretches are compositionally biased toward acidic residues: residues 112 to 125, 133 to 144, 152 to 169, 194 to 212, 222 to 243, and 250 to 265; these read EGSE…TEGA, ESEGGDQEESEG, MESE…DSGE, EVDE…EEPG, ESEG…EVIE, and ESED…ERSG. A run of 2 repeats spans residues 217 to 236 and 238 to 257. Residue N228 is glycosylated (N-linked (GlcNAc...) asparagine).

In terms of tissue distribution, first expressed in the vegetal plate and progressively the expression becomes restricted to a subset of endodermal cells as development proceeds.

May be an adhesion molecule involved in gastrulation of the sea urchin embryo. This is Protein ENDO16 (ENDO16) from Strongylocentrotus purpuratus (Purple sea urchin).